We begin with the raw amino-acid sequence, 257 residues long: Chymotrypsin-like elastase family member 3B (257 aa).

Residues 1–2 (VA) constitute a signal peptide (or 3). The propeptide at 3-15 (SGYGPPSSHPSSR) is activation peptide. The region spanning 16–255 (VVNGEDAVPY…FIDWIEETIA (240 aa)) is the Peptidase S1 domain. Asn38 is a glycosylation site (N-linked (GlcNAc...) asparagine). Disulfide bonds link Cys45/Cys61 and Cys104/Cys107. His60 functions as the Charge relay system in the catalytic mechanism. Asp110 serves as the catalytic Charge relay system. 3 disulfide bridges follow: Cys144/Cys210, Cys175/Cys191, and Cys200/Cys231. Catalysis depends on Ser204, which acts as the Charge relay system.

The protein belongs to the peptidase S1 family. Elastase subfamily.

The enzyme catalyses Preferential cleavage: Ala-|-Xaa. Does not hydrolyze elastin.. Its function is as follows. Efficient protease with alanine specificity but only little elastolytic activity. In Macaca mulatta (Rhesus macaque), this protein is Chymotrypsin-like elastase family member 3B (CELA3B).